Consider the following 165-residue polypeptide: UPF0303 protein BTH_I2506 (165 aa).

This sequence belongs to the UPF0303 family.

The polypeptide is UPF0303 protein BTH_I2506 (Burkholderia thailandensis (strain ATCC 700388 / DSM 13276 / CCUG 48851 / CIP 106301 / E264)).